The following is a 303-amino-acid chain: Movement protein (303 aa).

The protein belongs to the tobamovirus movement protein family.

The protein resides in the host cytoplasm. It localises to the host cytoskeleton. The protein localises to the host cell junction. It is found in the host plasmodesma. Its function is as follows. Transports viral genome to neighboring plant cells directly through plasmosdesmata, without any budding. The movement protein allows efficient cell to cell propagation, by bypassing the host cell wall barrier. Forms a ribonucleoprotein complex with viral RNA. Binds microtubules and modulates microtubule stability. Can bind double-stranded DNA. The chain is Movement protein (MP) from Cymbidium (ORSV).